The following is a 183-amino-acid chain: ADP-ribosylation factor-like protein 1 (183 aa).

Glycine 2 is lipidated: N-myristoyl glycine. GTP contacts are provided by residues 25-32, 68-72, and 127-130; these read GLDGAGKT, DLGGQ, and NKQD.

The protein belongs to the small GTPase superfamily. Arf family. In terms of assembly, homodimer. Interacts with IMH1 (via GRIP domain); the interaction is dependent on GTP. Interacts with MON2.

The protein resides in the golgi apparatus. Its function is as follows. Recruits golgins such as IMH1 to the Golgi. Can bind and hydrolyze GTP. May be involved in trafficking events within the endosomal system. This is ADP-ribosylation factor-like protein 1 (ARL1) from Saccharomyces cerevisiae (strain ATCC 204508 / S288c) (Baker's yeast).